The following is a 517-amino-acid chain: T-complex protein 11-like protein 2 (517 aa).

The disordered stretch occupies residues 1–59; that stretch reads MPFNGEKQYVNEDQQSDSESSRFSESTASLSDYGCSRQSFTSDSSSKSSSPASTSPPRG. Ser-16 is subject to Phosphoserine. Residues 17–55 show a composition bias toward low complexity; the sequence is DSESSRFSESTASLSDYGCSRQSFTSDSSSKSSSPASTS.

This sequence belongs to the TCP11 family. As to quaternary structure, interacts with FMNL2; this interaction promotes muscle-derived satellite cell (MDSC) migration and differentiation.

It localises to the cytoplasm. Its subcellular location is the cytoskeleton. Promotes the migration of muscle-derived satellite cells (MDSCs) during differentiation throught interaction with FMNL2 and therefore may participate in microfilament assembly. This Rattus norvegicus (Rat) protein is T-complex protein 11-like protein 2.